The sequence spans 382 residues: Mannitol-1-phosphate 5-dehydrogenase (382 aa).

Position 3–14 (3–14) interacts with NAD(+); the sequence is ALHFGAGNIGRG.

This sequence belongs to the mannitol dehydrogenase family.

It carries out the reaction D-mannitol 1-phosphate + NAD(+) = beta-D-fructose 6-phosphate + NADH + H(+). The chain is Mannitol-1-phosphate 5-dehydrogenase from Salmonella paratyphi A (strain ATCC 9150 / SARB42).